Here is a 592-residue protein sequence, read N- to C-terminus: A-type ATP synthase subunit A (592 aa).

234–241 (GPFGSGKT) lines the ATP pocket.

It belongs to the ATPase alpha/beta chains family. In terms of assembly, has multiple subunits with at least A(3), B(3), C, D, E, F, H, I and proteolipid K(x).

The protein localises to the cell membrane. The enzyme catalyses ATP + H2O + 4 H(+)(in) = ADP + phosphate + 5 H(+)(out). Its function is as follows. Produces ATP from ADP in the presence of a proton gradient across the membrane. The archaeal alpha chain is a catalytic subunit. Component of the A-type ATP synthase that produces ATP from ADP in the presence of a proton gradient across the membrane. The A chain is the catalytic subunit. This is A-type ATP synthase subunit A from Sulfolobus acidocaldarius (strain ATCC 33909 / DSM 639 / JCM 8929 / NBRC 15157 / NCIMB 11770).